The primary structure comprises 287 residues: ATP synthase gamma chain (287 aa).

This sequence belongs to the ATPase gamma chain family. In terms of assembly, F-type ATPases have 2 components, CF(1) - the catalytic core - and CF(0) - the membrane proton channel. CF(1) has five subunits: alpha(3), beta(3), gamma(1), delta(1), epsilon(1). CF(0) has three main subunits: a, b and c.

The protein resides in the cell inner membrane. In terms of biological role, produces ATP from ADP in the presence of a proton gradient across the membrane. The gamma chain is believed to be important in regulating ATPase activity and the flow of protons through the CF(0) complex. This is ATP synthase gamma chain from Photorhabdus laumondii subsp. laumondii (strain DSM 15139 / CIP 105565 / TT01) (Photorhabdus luminescens subsp. laumondii).